Reading from the N-terminus, the 114-residue chain is Large ribosomal subunit protein bL19 (114 aa).

The protein belongs to the bacterial ribosomal protein bL19 family.

In terms of biological role, this protein is located at the 30S-50S ribosomal subunit interface and may play a role in the structure and function of the aminoacyl-tRNA binding site. This chain is Large ribosomal subunit protein bL19, found in Desulfatibacillum aliphaticivorans.